A 650-amino-acid polypeptide reads, in one-letter code: MSRQNLVALTVTTLLGVAMGGFVLWKGIQRRWSKTSRVMQQQPQQPQQPQQPQPQPQPQPQPQPEHPQPQQQVPGGREWPPPEDDQLPFGALRAPRASWEERILQAEVVTVSQEAEWNQIQPFLKRELEDFPVLGIDCEWVNLEGKASPLSLLQMASPSGFCALVRLPRLIYGGRTLPRTLLDILADGAILKVGVGCSEDANKLLQDYGLIVRGCLDLRYLAMKQGNNILCNGLSLKSLAETILNFPLDKSLLLRCSNWDAENLTEDQVTYAARDAQISVALFLHLLGYPFSRDSYEEESTDQINWQKALERCRNMVDIPFRSKGLGRLVEEVNGEALESQLKPRNRKAKTDRMVPGNNQGRDPRKHKRKPLGVGYSARKSPLYDNCFLQAPDGQPLCTCDRRKAQWYLDKGIGELVSKEPFVVRLQFEPAGRPESPGDYYLMVKENLCVVCGKTDTYIRKNIIPHEYRKHFPIEMKDHNSHDVLLLCTSCHAISNYYDNHLKQQLAKEFQAPIGSEEGLRLLEDLERRQVRSGARALLNAESLPAHRKEELLHALREFYNTDIITEEMLHEAASLETRIYNESYIPHGLKVVQRHTEGGLRSLMQLESRWRQHFLDSMQPKHLPQQWSVDHNHQKLLRKYGDDLPIKLS.

Over 1–6 (MSRQNL) the chain is Mitochondrial intermembrane. Residues 7–29 (VALTVTTLLGVAMGGFVLWKGIQ) form a helical membrane-spanning segment. Residues 30-650 (RRWSKTSRVM…YGDDLPIKLS (621 aa)) are Cytoplasmic-facing. The interval 34-89 (KTSRVMQQQPQQPQQPQQPQPQPQPQPQPQPEHPQPQQQVPGGREWPPPEDDQLPF) is disordered. Over residues 49-67 (PQQPQPQPQPQPQPQPEHP) the composition is skewed to pro residues. Residues Asp137, Glu139, and Asp275 each coordinate a divalent metal cation. Positions 184–276 (ILADGAILKV…DQVTYAARDA (93 aa)) constitute a 3'-5' exonuclease domain. The tract at residues 340-373 (SQLKPRNRKAKTDRMVPGNNQGRDPRKHKRKPLG) is disordered.

This sequence belongs to the EXD2 family. As to quaternary structure, homodimer. Interacts with RBBP8, MRE11 and BRCA1. Mg(2+) serves as cofactor. The cofactor is Mn(2+).

It localises to the mitochondrion outer membrane. Its subcellular location is the mitochondrion matrix. The protein localises to the nucleus. The protein resides in the chromosome. It carries out the reaction Exonucleolytic cleavage in the 3'- to 5'-direction to yield nucleoside 5'-phosphates.. Functionally, exonuclease that has both 3'-5' exoribonuclease and exodeoxyribonuclease activities, depending on the divalent metal cation used as cofactor. In presence of Mg(2+), only shows 3'-5' exoribonuclease activity, while it shows both exoribonuclease and exodeoxyribonuclease activities in presence of Mn(2+). Acts as an exoribonuclease in mitochondrion, possibly by regulating ATP production and mitochondrial translation. Also involved in the response to DNA damage. Acts as 3'-5' exodeoxyribonuclease for double-strand breaks resection and efficient homologous recombination. Plays a key role in controlling the initial steps of chromosomal break repair, it is recruited to chromatin in a damage-dependent manner and functionally interacts with the MRN complex to accelerate resection through its 3'-5' exonuclease activity, which efficiently processes double-stranded DNA substrates containing nicks. Also involved in response to replicative stress: recruited to stalled forks and is required to stabilize and restart stalled replication forks by restraining excessive fork regression, thereby suppressing their degradation. This chain is Exonuclease 3'-5' domain-containing protein 2, found in Mus musculus (Mouse).